We begin with the raw amino-acid sequence, 44 residues long: Photosystem I reaction center subunit IX (44 aa).

The helical transmembrane segment at 7–27 (YLSVAPVLSTLWFGALAGLLI) threads the bilayer.

Belongs to the PsaJ family.

The protein localises to the plastid. Its subcellular location is the chloroplast thylakoid membrane. Its function is as follows. May help in the organization of the PsaE and PsaF subunits. The protein is Photosystem I reaction center subunit IX of Coffea arabica (Arabian coffee).